We begin with the raw amino-acid sequence, 44 residues long: Photosystem I reaction center subunit IX (44 aa).

A helical transmembrane segment spans residues 7–27 (YLSTAPVLATLWFGSLAGLLI).

The protein belongs to the PsaJ family.

The protein resides in the plastid. It is found in the chloroplast thylakoid membrane. Its function is as follows. May help in the organization of the PsaE and PsaF subunits. This chain is Photosystem I reaction center subunit IX, found in Calycanthus floridus var. glaucus (Eastern sweetshrub).